The chain runs to 487 residues: Glutamate mutase epsilon subunit (487 aa).

Residue Arg62 participates in L-glutamate binding. Gly64 contributes to the adenosylcob(III)alamin binding site. Arg96 is an L-glutamate binding site. An adenosylcob(III)alamin-binding site is contributed by Asn119. Residues 145 to 146, Glu167, and Tyr173 contribute to the L-glutamate site; that span reads RH. Pro176 is a binding site for adenosylcob(III)alamin. Tyr177 contributes to the L-glutamate binding site. The adenosylcob(III)alamin site is built by Phe289, Lys318, and Glu322. A disordered region spans residues 465–487; sequence SDGKLIGRPGGDNSPAGGASDAD.

This sequence belongs to the methylaspartate mutase GlmE subunit family. In terms of assembly, heterotetramer composed of 2 epsilon subunits (GlmE) and 2 sigma subunits (GlmS). GlmE exists as a homodimer and GlmS as a monomer. Adenosylcob(III)alamin is required as a cofactor.

It catalyses the reaction (2S,3S)-3-methyl-L-aspartate = L-glutamate. It functions in the pathway amino-acid degradation; L-glutamate degradation via mesaconate pathway; acetate and pyruvate from L-glutamate: step 1/4. Functionally, catalyzes the carbon skeleton rearrangement of L-glutamate to L-threo-3-methylaspartate ((2S,3S)-3-methylaspartate). This Haloarcula marismortui (strain ATCC 43049 / DSM 3752 / JCM 8966 / VKM B-1809) (Halobacterium marismortui) protein is Glutamate mutase epsilon subunit.